We begin with the raw amino-acid sequence, 484 residues long: tRNA sulfurtransferase (484 aa).

Residues 63-167 (EAFADRLSCI…RENLYLVVNR (105 aa)) enclose the THUMP domain. ATP contacts are provided by residues 185–186 (LI), lysine 267, glycine 289, and glutamine 298. The cysteines at positions 346 and 458 are disulfide-linked. Residues 406 to 484 (VNSNEVIIDV…GYENVKVYRP (79 aa)) enclose the Rhodanese domain. Cysteine 458 (cysteine persulfide intermediate) is an active-site residue.

Belongs to the ThiI family.

The protein localises to the cytoplasm. It carries out the reaction [ThiI sulfur-carrier protein]-S-sulfanyl-L-cysteine + a uridine in tRNA + 2 reduced [2Fe-2S]-[ferredoxin] + ATP + H(+) = [ThiI sulfur-carrier protein]-L-cysteine + a 4-thiouridine in tRNA + 2 oxidized [2Fe-2S]-[ferredoxin] + AMP + diphosphate. It catalyses the reaction [ThiS sulfur-carrier protein]-C-terminal Gly-Gly-AMP + S-sulfanyl-L-cysteinyl-[cysteine desulfurase] + AH2 = [ThiS sulfur-carrier protein]-C-terminal-Gly-aminoethanethioate + L-cysteinyl-[cysteine desulfurase] + A + AMP + 2 H(+). It participates in cofactor biosynthesis; thiamine diphosphate biosynthesis. Catalyzes the ATP-dependent transfer of a sulfur to tRNA to produce 4-thiouridine in position 8 of tRNAs, which functions as a near-UV photosensor. Also catalyzes the transfer of sulfur to the sulfur carrier protein ThiS, forming ThiS-thiocarboxylate. This is a step in the synthesis of thiazole, in the thiamine biosynthesis pathway. The sulfur is donated as persulfide by IscS. The polypeptide is tRNA sulfurtransferase (Shewanella sediminis (strain HAW-EB3)).